A 430-amino-acid chain; its full sequence is Tol-Pal system protein TolB (430 aa).

The N-terminal stretch at 1 to 21 (MKQALRVAFGFLILWASVLHA) is a signal peptide.

It belongs to the TolB family. As to quaternary structure, the Tol-Pal system is composed of five core proteins: the inner membrane proteins TolA, TolQ and TolR, the periplasmic protein TolB and the outer membrane protein Pal. They form a network linking the inner and outer membranes and the peptidoglycan layer.

It is found in the periplasm. Its function is as follows. Part of the Tol-Pal system, which plays a role in outer membrane invagination during cell division and is important for maintaining outer membrane integrity. TolB occupies a key intermediary position in the Tol-Pal system because it communicates directly with both membrane-embedded components, Pal in the outer membrane and TolA in the inner membrane. The polypeptide is Tol-Pal system protein TolB (Shigella boydii serotype 4 (strain Sb227)).